The following is a 342-amino-acid chain: L-threonine 3-dehydrogenase (342 aa).

Cys38 lines the Zn(2+) pocket. Catalysis depends on charge relay system residues Thr40 and His43. His63, Glu64, Cys93, Cys96, Cys99, and Cys107 together coordinate Zn(2+). NAD(+) is bound by residues Ile175, Asp195, Arg200, Leu262 to Ile264, and Ile286 to Tyr287.

It belongs to the zinc-containing alcohol dehydrogenase family. In terms of assembly, homotetramer. Requires Zn(2+) as cofactor.

It localises to the cytoplasm. It carries out the reaction L-threonine + NAD(+) = (2S)-2-amino-3-oxobutanoate + NADH + H(+). It participates in amino-acid degradation; L-threonine degradation via oxydo-reductase pathway; glycine from L-threonine: step 1/2. Catalyzes the NAD(+)-dependent oxidation of L-threonine to 2-amino-3-ketobutyrate. This chain is L-threonine 3-dehydrogenase, found in Burkholderia ambifaria (strain ATCC BAA-244 / DSM 16087 / CCUG 44356 / LMG 19182 / AMMD) (Burkholderia cepacia (strain AMMD)).